We begin with the raw amino-acid sequence, 362 residues long: tRNA-specific 2-thiouridylase MnmA (362 aa).

Residues 13-20 (GLSGGVDS) and methionine 39 contribute to the ATP site. Residues 99–101 (NPD) form an interaction with target base in tRNA region. The active-site Nucleophile is cysteine 104. An intrachain disulfide couples cysteine 104 to cysteine 200. Residue glycine 128 coordinates ATP. Residues 150 to 152 (KDQ) are interaction with tRNA. The active-site Cysteine persulfide intermediate is cysteine 200.

Belongs to the MnmA/TRMU family.

It is found in the cytoplasm. It carries out the reaction S-sulfanyl-L-cysteinyl-[protein] + uridine(34) in tRNA + AH2 + ATP = 2-thiouridine(34) in tRNA + L-cysteinyl-[protein] + A + AMP + diphosphate + H(+). Catalyzes the 2-thiolation of uridine at the wobble position (U34) of tRNA, leading to the formation of s(2)U34. The protein is tRNA-specific 2-thiouridylase MnmA of Coxiella burnetii (strain Dugway 5J108-111).